A 374-amino-acid polypeptide reads, in one-letter code: Chaperone protein DnaJ (374 aa).

In terms of domain architecture, J spans 5–70; sequence DFYEILGVGK…QKRDAYDRYG (66 aa). The interval 29–50 is disordered; the sequence is AMKHHPDRNPDSKGAEDKFKEA. Residues 35–50 are compositionally biased toward basic and acidic residues; sequence DRNPDSKGAEDKFKEA. The CR-type zinc-finger motif lies at 134-212; sequence GYDTTIRVPS…CSGAGKIKRN (79 aa). Cys147, Cys150, Cys164, Cys167, Cys186, Cys189, Cys200, and Cys203 together coordinate Zn(2+). CXXCXGXG motif repeat units lie at residues 147–154, 164–171, 186–193, and 200–207; these read CETCDGSG, CTTCGGHG, CPKCHGSG, and CGTCSGAG.

It belongs to the DnaJ family. As to quaternary structure, homodimer. Requires Zn(2+) as cofactor.

It is found in the cytoplasm. Participates actively in the response to hyperosmotic and heat shock by preventing the aggregation of stress-denatured proteins and by disaggregating proteins, also in an autonomous, DnaK-independent fashion. Unfolded proteins bind initially to DnaJ; upon interaction with the DnaJ-bound protein, DnaK hydrolyzes its bound ATP, resulting in the formation of a stable complex. GrpE releases ADP from DnaK; ATP binding to DnaK triggers the release of the substrate protein, thus completing the reaction cycle. Several rounds of ATP-dependent interactions between DnaJ, DnaK and GrpE are required for fully efficient folding. Also involved, together with DnaK and GrpE, in the DNA replication of plasmids through activation of initiation proteins. This chain is Chaperone protein DnaJ, found in Janthinobacterium sp. (strain Marseille) (Minibacterium massiliensis).